Here is a 138-residue protein sequence, read N- to C-terminus: Cysteine desulfuration protein SufE (138 aa).

The Cysteine persulfide intermediate role is filled by cysteine 51.

It belongs to the SufE family. In terms of assembly, homodimer. Interacts with SufS.

Its subcellular location is the cytoplasm. The protein operates within cofactor biosynthesis; iron-sulfur cluster biosynthesis. In terms of biological role, participates in cysteine desulfuration mediated by SufS. Cysteine desulfuration mobilizes sulfur from L-cysteine to yield L-alanine and constitutes an essential step in sulfur metabolism for biosynthesis of a variety of sulfur-containing biomolecules. Functions as a sulfur acceptor for SufS, by mediating the direct transfer of the sulfur atom from the S-sulfanylcysteine of SufS, an intermediate product of cysteine desulfuration process. This is Cysteine desulfuration protein SufE from Salmonella arizonae (strain ATCC BAA-731 / CDC346-86 / RSK2980).